We begin with the raw amino-acid sequence, 93 residues long: Small ribosomal subunit protein uS19 (93 aa).

This sequence belongs to the universal ribosomal protein uS19 family.

Functionally, protein S19 forms a complex with S13 that binds strongly to the 16S ribosomal RNA. This chain is Small ribosomal subunit protein uS19, found in Mycolicibacterium paratuberculosis (strain ATCC BAA-968 / K-10) (Mycobacterium paratuberculosis).